The sequence spans 267 residues: Palmitoyltransferase ZDHHC12 (267 aa).

Residues 1 to 9 are Cytoplasmic-facing; it reads MAPWALLSP. Residues 10–30 form a helical membrane-spanning segment; it reads GVLVRTGHTVLTWGITLVLFL. At 31–43 the chain is on the lumenal side; the sequence is HDTELRQWEEQGE. Residues 44–64 traverse the membrane as a helical segment; sequence LLLPLTFLLLVLGSLLLYLAV. Residues 65-140 are Cytoplasmic-facing; it reads SLMDPGYVNV…ENCVGERNHP (76 aa). Residues 97–147 form the DHHC domain; that stretch reads RRCRYCLVLQPLRARHCRECRRCVRRYDHHCPWMENCVGERNHPLFVVYLA. Catalysis depends on cysteine 127, which acts as the S-palmitoyl cysteine intermediate. Residues 141–161 form a helical membrane-spanning segment; that stretch reads LFVVYLALQLVVLLWGLYLAW. At 162-178 the chain is on the lumenal side; sequence SGLRFFQPWGQWLRSSG. Residues 179–199 traverse the membrane as a helical segment; that stretch reads LLFATFLLLSLFSLVASLLLV. Residues 200–267 are Cytoplasmic-facing; sequence SHLYLVASNT…EEEEGSSPAV (68 aa).

It belongs to the DHHC palmitoyltransferase family. As to expression, widely expressed.

It is found in the golgi apparatus membrane. Its subcellular location is the endoplasmic reticulum membrane. It carries out the reaction L-cysteinyl-[protein] + hexadecanoyl-CoA = S-hexadecanoyl-L-cysteinyl-[protein] + CoA. Functionally, palmitoyltransferase that catalyzes the addition of palmitate onto various protein substrates. Has a palmitoyltransferase activity toward gephyrin/GPHN, regulating its clustering at synapses and its function in gamma-aminobutyric acid receptor clustering. Thereby, indirectly regulates GABAergic synaptic transmission. Negatively regulates NLRP3-driven inflammation. Catalyzes NLRP3 palmitoylation, leading to its degradation via the chaperone-mediated autophagy (CMA) process. In Homo sapiens (Human), this protein is Palmitoyltransferase ZDHHC12.